The following is a 650-amino-acid chain: Acetyl-coenzyme A synthetase (650 aa).

Residues 191–194 (RGGR), threonine 311, and asparagine 335 each bind CoA. ATP is bound by residues 387-389 (GEP), 411-416 (DTWWQT), aspartate 501, and arginine 516. Serine 524 provides a ligand contact to CoA. ATP is bound at residue arginine 527. Valine 538, histidine 540, and isoleucine 543 together coordinate Mg(2+). Residue arginine 585 participates in CoA binding. Lysine 610 carries the post-translational modification N6-acetyllysine.

Belongs to the ATP-dependent AMP-binding enzyme family. Requires Mg(2+) as cofactor. Acetylated. Deacetylation by the SIR2-homolog deacetylase activates the enzyme.

The catalysed reaction is acetate + ATP + CoA = acetyl-CoA + AMP + diphosphate. Catalyzes the conversion of acetate into acetyl-CoA (AcCoA), an essential intermediate at the junction of anabolic and catabolic pathways. AcsA undergoes a two-step reaction. In the first half reaction, AcsA combines acetate with ATP to form acetyl-adenylate (AcAMP) intermediate. In the second half reaction, it can then transfer the acetyl group from AcAMP to the sulfhydryl group of CoA, forming the product AcCoA. The polypeptide is Acetyl-coenzyme A synthetase (Vibrio vulnificus (strain YJ016)).